The chain runs to 506 residues: Kynurenine 3-monooxygenase (506 aa).

Residues 153–175 (QETSLLPGEESEKDKKQNTEDED) are disordered. Over residues 162-171 (ESEKDKKQNT) the composition is skewed to basic and acidic residues.

Belongs to the aromatic-ring hydroxylase family. KMO subfamily. Requires FAD as cofactor.

Its subcellular location is the mitochondrion outer membrane. The enzyme catalyses L-kynurenine + NADPH + O2 + H(+) = 3-hydroxy-L-kynurenine + NADP(+) + H2O. Its pathway is cofactor biosynthesis; NAD(+) biosynthesis; quinolinate from L-kynurenine: step 1/3. Catalyzes the hydroxylation of L-kynurenine (L-Kyn) to form 3-hydroxy-L-kynurenine (L-3OHKyn). Required for synthesis of quinolinic acid. The sequence is that of Kynurenine 3-monooxygenase from Cryptococcus neoformans var. neoformans serotype D (strain B-3501A) (Filobasidiella neoformans).